We begin with the raw amino-acid sequence, 233 residues long: Aquaglyceroporin AqpS (233 aa).

Helical transmembrane passes span V11 to A31 and L40 to L60. The NPA 1 signature appears at N69–A71. 3 helical membrane-spanning segments follow: residues A89 to F109, A125 to I145, and V152 to F172. An NPA 2 motif is present at residues N174–A176. Residues G193–M213 traverse the membrane as a helical segment.

This sequence belongs to the MIP/aquaporin (TC 1.A.8) family. NIP (TC 1.A.8.12) subfamily.

The protein localises to the cell inner membrane. Involved in resistance to arsenic. Facilitates efflux of arsenite [As(III)]. Arsenate [As(V)] enters the cell through phosphate transport systems and is reduced to arsenite by the arsenate reductase ArsC. Internally generated arsenite flows out of the cell by downhill movement through AqpS. Can also transport the highly toxic methylarsenite [MAs(III)] and the relatively non-toxic methylarsenate [MAs(V)]. May be a component of an methylarsenite resistance pathway in which methylarsenite enters cells via AqpS, is oxidized by ArsH to methylarsenate, which exits the cells via AqpS. This pathway may confer a selective advantage for R.melliloti to grow in the presence of environmental methylarsenicals. This is Aquaglyceroporin AqpS from Rhizobium meliloti (strain 1021) (Ensifer meliloti).